The primary structure comprises 505 residues: Maturase K (505 aa).

It belongs to the intron maturase 2 family. MatK subfamily.

The protein resides in the plastid. Its subcellular location is the chloroplast. Functionally, usually encoded in the trnK tRNA gene intron. Probably assists in splicing its own and other chloroplast group II introns. This chain is Maturase K, found in Barclaya longifolia (Orchid lily).